The following is a 512-amino-acid chain: Extracellular serine/threonine protein kinase CeFam20 (512 aa).

Residues 1–6 (MRCNIK) lie on the Cytoplasmic side of the membrane. A helical; Signal-anchor for type II membrane protein membrane pass occupies residues 7–26 (RLFTLAIGVFAATLVIISFS). Over 27 to 512 (KDNYEREWKQ…QDKKDDKKTV (486 aa)) the chain is Lumenal. A disulfide bridge connects residues Cys-110 and Cys-144. The N-linked (GlcNAc...) asparagine glycan is linked to Asn-113. ATP contacts are provided by Gln-176, Lys-192, and Glu-213. A Mn(2+)-binding site is contributed by Glu-213. The N-linked (GlcNAc...) asparagine glycan is linked to Asn-242. 2 cysteine pairs are disulfide-bonded: Cys-268-Cys-284 and Cys-273-Cys-277. Residue 295 to 298 (QVFL) coordinates ATP. Intrachain disulfides connect Cys-333/Cys-409 and Cys-410/Cys-469. Asp-366 is an active-site residue. 2 residues coordinate ATP: Glu-371 and Asp-387. Residue Asp-387 participates in Mn(2+) binding. Positions 486–512 (PDVSDAEQNDEEQSEEHQDKKDDKKTV) are disordered. Over residues 489–499 (SDAEQNDEEQS) the composition is skewed to acidic residues. Over residues 500–512 (EEHQDKKDDKKTV) the composition is skewed to basic and acidic residues.

Belongs to the FAM20 family. Requires Mn(2+) as cofactor.

It localises to the golgi apparatus membrane. The protein resides in the secreted. The catalysed reaction is L-seryl-[protein] + ATP = O-phospho-L-seryl-[protein] + ADP + H(+). It catalyses the reaction L-threonyl-[protein] + ATP = O-phospho-L-threonyl-[protein] + ADP + H(+). Its function is as follows. Golgi serine/threonine protein kinase that phosphorylates secretory pathway proteins within Ser-x-Glu/pSer motifs. This Caenorhabditis elegans protein is Extracellular serine/threonine protein kinase CeFam20.